Consider the following 128-residue polypeptide: MFIEVLKSKIHRATVTEANLNYVGSITIDEELMKAAGIYENEKVQVVNINNGERFETYVIKGEKGSGTICLNGAAARLVQVGDKIIIMAYCLLTMEEYYNHKPRIVFVDDENKIVRLSDKEEHSECIC.

S25 functions as the Schiff-base intermediate with substrate; via pyruvic acid in the catalytic mechanism. A Pyruvic acid (Ser) modification is found at S25. T57 contributes to the substrate binding site. The active-site Proton donor is the Y58. Residue 73 to 75 coordinates substrate; it reads GAA.

It belongs to the PanD family. In terms of assembly, heterooctamer of four alpha and four beta subunits. Pyruvate serves as cofactor. Post-translationally, is synthesized initially as an inactive proenzyme, which is activated by self-cleavage at a specific serine bond to produce a beta-subunit with a hydroxyl group at its C-terminus and an alpha-subunit with a pyruvoyl group at its N-terminus.

The protein resides in the cytoplasm. It carries out the reaction L-aspartate + H(+) = beta-alanine + CO2. The protein operates within cofactor biosynthesis; (R)-pantothenate biosynthesis; beta-alanine from L-aspartate: step 1/1. Its function is as follows. Catalyzes the pyruvoyl-dependent decarboxylation of aspartate to produce beta-alanine. The sequence is that of Aspartate 1-decarboxylase from Caldicellulosiruptor bescii (strain ATCC BAA-1888 / DSM 6725 / KCTC 15123 / Z-1320) (Anaerocellum thermophilum).